The sequence spans 500 residues: Glycerol kinase (500 aa).

Thr-16 serves as a coordination point for ADP. Residues Thr-16 and Thr-17 each contribute to the ATP site. Thr-16 provides a ligand contact to sn-glycerol 3-phosphate. Arg-20 provides a ligand contact to ADP. Residues Arg-86, Glu-87, Tyr-138, and Asp-243 each contribute to the sn-glycerol 3-phosphate site. Arg-86, Glu-87, Tyr-138, Asp-243, and Gln-244 together coordinate glycerol. Residues Thr-265 and Gly-313 each contribute to the ADP site. 4 residues coordinate ATP: Thr-265, Gly-313, Gln-317, and Gly-414. Residues Gly-414 and Asn-418 each coordinate ADP.

Belongs to the FGGY kinase family.

The catalysed reaction is glycerol + ATP = sn-glycerol 3-phosphate + ADP + H(+). It functions in the pathway polyol metabolism; glycerol degradation via glycerol kinase pathway; sn-glycerol 3-phosphate from glycerol: step 1/1. With respect to regulation, inhibited by fructose 1,6-bisphosphate (FBP). Functionally, key enzyme in the regulation of glycerol uptake and metabolism. Catalyzes the phosphorylation of glycerol to yield sn-glycerol 3-phosphate. This chain is Glycerol kinase, found in Nostoc sp. (strain PCC 7120 / SAG 25.82 / UTEX 2576).